A 134-amino-acid polypeptide reads, in one-letter code: Endoribonuclease YbeY (134 aa).

Zn(2+) is bound by residues histidine 94, histidine 98, and histidine 104.

The protein belongs to the endoribonuclease YbeY family. Zn(2+) serves as cofactor.

The protein localises to the cytoplasm. Its function is as follows. Single strand-specific metallo-endoribonuclease involved in late-stage 70S ribosome quality control and in maturation of the 3' terminus of the 16S rRNA. The protein is Endoribonuclease YbeY of Campylobacter jejuni subsp. jejuni serotype O:23/36 (strain 81-176).